The primary structure comprises 272 residues: Indole-3-glycerol phosphate synthase (272 aa).

It belongs to the TrpC family.

It carries out the reaction 1-(2-carboxyphenylamino)-1-deoxy-D-ribulose 5-phosphate + H(+) = (1S,2R)-1-C-(indol-3-yl)glycerol 3-phosphate + CO2 + H2O. It participates in amino-acid biosynthesis; L-tryptophan biosynthesis; L-tryptophan from chorismate: step 4/5. This is Indole-3-glycerol phosphate synthase from Paenarthrobacter aurescens (strain TC1).